A 145-amino-acid chain; its full sequence is 3-dehydroquinate dehydratase (145 aa).

Tyr24 serves as the catalytic Proton acceptor. Substrate contacts are provided by Asn75, His81, and Asp88. Catalysis depends on His101, which acts as the Proton donor. Substrate is bound by residues 102–103 (IS) and Arg112.

This sequence belongs to the type-II 3-dehydroquinase family. Homododecamer.

The catalysed reaction is 3-dehydroquinate = 3-dehydroshikimate + H2O. The protein operates within metabolic intermediate biosynthesis; chorismate biosynthesis; chorismate from D-erythrose 4-phosphate and phosphoenolpyruvate: step 3/7. Functionally, catalyzes a trans-dehydration via an enolate intermediate. The protein is 3-dehydroquinate dehydratase of Rhizobium etli (strain CIAT 652).